A 168-amino-acid polypeptide reads, in one-letter code: 3-isopropylmalate dehydratase small subunit 2 (168 aa).

It belongs to the LeuD family. LeuD type 2 subfamily. In terms of assembly, heterodimer of LeuC and LeuD.

It carries out the reaction (2R,3S)-3-isopropylmalate = (2S)-2-isopropylmalate. Its pathway is amino-acid biosynthesis; L-leucine biosynthesis; L-leucine from 3-methyl-2-oxobutanoate: step 2/4. Functionally, catalyzes the isomerization between 2-isopropylmalate and 3-isopropylmalate, via the formation of 2-isopropylmaleate. This Methanopyrus kandleri (strain AV19 / DSM 6324 / JCM 9639 / NBRC 100938) protein is 3-isopropylmalate dehydratase small subunit 2 (leuD2).